The sequence spans 266 residues: DNA damage-regulated autophagy modulator protein 2 (266 aa).

Transmembrane regions (helical) follow at residues Leu8 to Ile28, Lys53 to Val73, Ile88 to Ile108, Phe118 to Val138, Leu160 to Leu180, and Ile207 to Ile227.

This sequence belongs to the DRAM/TMEM150 family. In terms of tissue distribution, expression is down-regulated in ovarian tumors (at protein level). Widely expressed with highest levels in placenta and heart. Expressed in the retina. Not detected in brain or thymus.

The protein resides in the lysosome membrane. The protein localises to the photoreceptor inner segment. Its subcellular location is the apical cell membrane. Plays a role in the initiation of autophagy. In the retina, might be involved in the process of photoreceptor cells renewal and recycling to preserve visual function. Induces apoptotic cell death when coexpressed with DRAM1. This Homo sapiens (Human) protein is DNA damage-regulated autophagy modulator protein 2 (DRAM2).